A 119-amino-acid chain; its full sequence is Aspartate 1-decarboxylase (119 aa).

Ser-25 (schiff-base intermediate with substrate; via pyruvic acid) is an active-site residue. Ser-25 carries the pyruvic acid (Ser) modification. Thr-57 contributes to the substrate binding site. Tyr-58 (proton donor) is an active-site residue. 73–75 (GAA) serves as a coordination point for substrate.

Belongs to the PanD family. As to quaternary structure, heterooctamer of four alpha and four beta subunits. The cofactor is pyruvate. Is synthesized initially as an inactive proenzyme, which is activated by self-cleavage at a specific serine bond to produce a beta-subunit with a hydroxyl group at its C-terminus and an alpha-subunit with a pyruvoyl group at its N-terminus.

The protein resides in the cytoplasm. The catalysed reaction is L-aspartate + H(+) = beta-alanine + CO2. It participates in cofactor biosynthesis; (R)-pantothenate biosynthesis; beta-alanine from L-aspartate: step 1/1. Functionally, catalyzes the pyruvoyl-dependent decarboxylation of aspartate to produce beta-alanine. This Thermosipho melanesiensis (strain DSM 12029 / CIP 104789 / BI429) protein is Aspartate 1-decarboxylase.